Here is a 516-residue protein sequence, read N- to C-terminus: Gamma-aminobutyrate transaminase 1, mitochondrial (516 aa).

The transit peptide at 1-47 (MVIARGLLRSNASSSSSQAINLLKYVTSTGSLQGHTQNLCDASTRHF) directs the protein to the mitochondrion. Over residues 45 to 60 (RHFSSVPSPQSNSTEE) the composition is skewed to polar residues. The disordered stretch occupies residues 45 to 64 (RHFSSVPSPQSNSTEENGFK). Position 171 to 172 (171 to 172 (GS)) interacts with pyridoxal 5'-phosphate. Substrate is bound at residue Tyr-204. A pyridoxal 5'-phosphate-binding site is contributed by Asp-311. A substrate-binding site is contributed by Lys-340. N6-(pyridoxal phosphate)lysine is present on Lys-340.

This sequence belongs to the class-III pyridoxal-phosphate-dependent aminotransferase family.

Its subcellular location is the mitochondrion. The enzyme catalyses 4-aminobutanoate + pyruvate = succinate semialdehyde + L-alanine. The catalysed reaction is 4-aminobutanoate + glyoxylate = succinate semialdehyde + glycine. In terms of biological role, transaminase that degrades gamma-amino butyric acid (GABA) and uses pyruvate as amino-group acceptor, but not 2-oxoglutarate. The sequence is that of Gamma-aminobutyrate transaminase 1, mitochondrial from Oryza sativa subsp. indica (Rice).